A 261-amino-acid polypeptide reads, in one-letter code: Carbonic anhydrase 1 (261 aa).

Alanine 2 carries the post-translational modification N-acetylalanine. One can recognise an Alpha-carbonic anhydrase domain in the interval 4 to 261 (PDWGYDGENG…LNGRTVKASF (258 aa)). Residue histidine 65 is the Proton donor/acceptor of the active site. Residues histidine 95, histidine 97, and histidine 120 each contribute to the Zn(2+) site. Substrate contacts are provided by residues threonine 200 and 200-201 (TH).

This sequence belongs to the alpha-carbonic anhydrase family. Zn(2+) is required as a cofactor.

The protein localises to the cytoplasm. It carries out the reaction hydrogencarbonate + H(+) = CO2 + H2O. The catalysed reaction is urea = cyanamide + H2O. Its activity is regulated as follows. Inhibited by acetazolamide. Catalyzes the reversible hydration of carbon dioxide. Can hydrate cyanamide to urea. The sequence is that of Carbonic anhydrase 1 (CA1) from Bos taurus (Bovine).